The chain runs to 375 residues: Adiponectin receptor protein 1 (375 aa).

The segment at 1-60 (MSSHKGSVVAQGNGAPASNREADTVELAELGPLLEEKGKRVIANPPKAEEEQTCPVPQEE) is disordered. Over 1–136 (MSSHKGSVVA…SIFRIHTETG (136 aa)) the chain is Cytoplasmic. A helical membrane pass occupies residues 137 to 157 (NIWTHLLGFVLFLFLGILTML). Residues 158 to 170 (RPNMYFMAPLQEK) are Extracellular-facing. A helical transmembrane segment spans residues 171–191 (VVFGMFFLGAVLCLSFSWLFH). H191 is a Zn(2+) binding site. At 192–203 (TVYCHSEKVSRT) the chain is on the cytoplasmic side. The chain crosses the membrane as a helical span at residues 204–224 (FSKLDYSGIALLIMGSFVPWL). Over 225 to 234 (YYSFYCSPQP) the chain is Extracellular. A helical membrane pass occupies residues 235–255 (RLIYLSIVCVLGISAIIVAQW). The Cytoplasmic portion of the chain corresponds to 256–264 (DRFATPKHR). Residues 265–285 (QTRAGVFLGLGLSGVVPTMHF) traverse the membrane as a helical segment. At 286–298 (TIAEGFVKATTVG) the chain is on the extracellular side. A helical transmembrane segment spans residues 299–319 (QMGWFFLMAVMYITGAGLYAA). Residues 320-337 (RIPERFFPGKFDIWFQSH) are Cytoplasmic-facing. The Zn(2+) site is built by H337 and H341. The helical transmembrane segment at 338–358 (QIFHVLVVAAAFVHFYGVSNL) threads the bilayer. Residues 359 to 375 (QEFRYGLEGGCTDDTLL) lie on the Extracellular side of the membrane.

The protein belongs to the ADIPOR family. In terms of assembly, may form homooligomers and heterooligomers with ADIPOR2. Interacts with APPL2 (via BAR domain); hinders the accessibility of APPL1 to ADIPOR1; negatively regulates adiponectin signaling; ADIPOQ dissociates this interaction and facilitates the recruitment of APPL1 to ADIPOR1. Interacts with APPL1; ADIPOQ enhances this interaction; inhibites adiponectin-stimulated binding of APPL2 to ADIPOR1. Widely expressed. Highly expressed in heart and skeletal muscle. Expressed at intermediate level in brain, spleen, kidney, liver, placenta, lung and peripheral blood leukocytes. Weakly expressed in colon, thymus and small intestine.

Its subcellular location is the cell membrane. In terms of biological role, receptor for ADIPOQ, an essential hormone secreted by adipocytes that regulates glucose and lipid metabolism. Required for normal glucose and fat homeostasis and for maintaining a normal body weight. ADIPOQ-binding activates a signaling cascade that leads to increased AMPK activity, and ultimately to increased fatty acid oxidation, increased glucose uptake and decreased gluconeogenesis. Has high affinity for globular adiponectin and low affinity for full-length adiponectin. The polypeptide is Adiponectin receptor protein 1 (Homo sapiens (Human)).